Consider the following 34-residue polypeptide: Subtilosin-A (34 aa).

Residues 1–34 (NKGCATCSIGIACLVDGPIPDFECAGATGLGLWG) constitute a cross-link (cyclopeptide (Asn-Gly)). Positions 7 to 28 (CSIGIACLVDGPIPDFECAGAT) form a cross-link, 2-cysteinyl-D-allo-threonine (Cys-Thr). Residues 13–22 (CLVDGPIPDF) constitute a cross-link (2-cysteinyl-L-phenylalanine (Cys-Phe)).

It belongs to the bacteriocin class V family. Alpha-amino of Asn-1 is covalently linked with the carboxyl of Gly-34 to form a cyclopeptide. Thioether cross-links are formed between cysteines and the alpha-carbons of other amino acids, Cys-7 to Thr-28 and Cys-13 to Phe-22. In forming this cross-link, Thr-28 is converted to D-amino acid.

It is found in the secreted. Has bactericidal activity against some Gram-positive bacteria. The chain is Subtilosin-A from Cytobacillus firmus (Bacillus firmus).